A 227-amino-acid chain; its full sequence is Ribonuclease 3 (227 aa).

Residues 4–126 (LDRLERKIGY…IIGAMSLDQG (123 aa)) enclose the RNase III domain. Glutamate 39 serves as a coordination point for Mg(2+). The active site involves aspartate 43. Mg(2+)-binding residues include aspartate 112 and glutamate 115. Glutamate 115 is an active-site residue. The region spanning 153 to 226 (DAKTRLQEYL…AEQILKELDI (74 aa)) is the DRBM domain.

This sequence belongs to the ribonuclease III family. Homodimer. Mg(2+) serves as cofactor.

It localises to the cytoplasm. The catalysed reaction is Endonucleolytic cleavage to 5'-phosphomonoester.. Its function is as follows. Digests double-stranded RNA. Involved in the processing of primary rRNA transcript to yield the immediate precursors to the large and small rRNAs (23S and 16S). Processes some mRNAs, and tRNAs when they are encoded in the rRNA operon. Processes pre-crRNA and tracrRNA of type II CRISPR loci if present in the organism. The sequence is that of Ribonuclease 3 from Haemophilus influenzae (strain 86-028NP).